Consider the following 140-residue polypeptide: Large ribosomal subunit protein uL16 (140 aa).

Over residues 1–14 (MLSPRRTKFRKQQR) the composition is skewed to basic residues. Positions 1 to 22 (MLSPRRTKFRKQQRGRMEGAAT) are disordered.

The protein belongs to the universal ribosomal protein uL16 family. Part of the 50S ribosomal subunit.

In terms of biological role, binds 23S rRNA and is also seen to make contacts with the A and possibly P site tRNAs. This Cyanothece sp. (strain PCC 7425 / ATCC 29141) protein is Large ribosomal subunit protein uL16.